The sequence spans 2359 residues: Nonribosomal peptide synthetase anaPS (2359 aa).

The interval 239 to 633 is adenylation 1; sequence RNATVHGDTL…VRRKDNQVKI (395 aa). The Carrier 1 domain maps to 770–846; the sequence is AAQGKGEEAI…ELASAANLSN (77 aa). Serine 807 is subject to O-(pantetheine 4'-phosphoryl)serine. Residues 883 to 1292 are condensation 1; it reads EDIYPSTALQ…VGDLPRMSRQ (410 aa). The tract at residues 1321-1709 is adenylation 2; the sequence is LEYPNACAVS…GRKDSQIKIR (389 aa). In terms of domain architecture, Carrier 2 spans 1842–1918; the sequence is APSNSVEQDL…AIANKIGVVS (77 aa). Position 1879 is an O-(pantetheine 4'-phosphoryl)serine (serine 1879). Positions 1936 to 2356 are condensation 2; it reads LTPIQEFFFE…LVKCLEDLAS (421 aa).

The protein belongs to the NRP synthetase family.

The enzyme catalyses anthranilate + L-tryptophan + 2 ATP = (R)-benzodiazepinedione + 2 AMP + 2 diphosphate + H(+). It participates in alkaloid biosynthesis. Nonribosomal peptide synthetase; part of the gene cluster that mediates the biosynthesis of the prenylated pyrroloindoline diketopiperazine acetylaszonalenin. The first step in the pathway is the formation of (R)-benzodiazepinedione by condensation of tryptophan and anthranilic acid catalyzed by the non-ribosomal peptide synthetase anaPS. The prenyltransferase anaPT then converts (R)-benzodiazepinedione to aszonalenin in the presence of dimethylallyl diphosphate (DMAPP) via C3-prenylation. The last step in the biosynthesis of acetylaszonalenin via acetylation of aszonalenin at position N1 catalyzed by anaAT. This is Nonribosomal peptide synthetase anaPS from Neosartorya fischeri (strain ATCC 1020 / DSM 3700 / CBS 544.65 / FGSC A1164 / JCM 1740 / NRRL 181 / WB 181) (Aspergillus fischerianus).